The chain runs to 118 residues: Small ribosomal subunit protein uS13 (118 aa).

The segment at 94 to 118 (GLPVRGQRTKTNARTRKGPRKPIKK) is disordered.

It belongs to the universal ribosomal protein uS13 family. In terms of assembly, part of the 30S ribosomal subunit. Forms a loose heterodimer with protein S19. Forms two bridges to the 50S subunit in the 70S ribosome.

Functionally, located at the top of the head of the 30S subunit, it contacts several helices of the 16S rRNA. In the 70S ribosome it contacts the 23S rRNA (bridge B1a) and protein L5 of the 50S subunit (bridge B1b), connecting the 2 subunits; these bridges are implicated in subunit movement. Contacts the tRNAs in the A and P-sites. The polypeptide is Small ribosomal subunit protein uS13 (Salmonella paratyphi A (strain ATCC 9150 / SARB42)).